A 156-amino-acid polypeptide reads, in one-letter code: ATP synthase subunit b (156 aa).

A helical transmembrane segment spans residues 7–27 (LFAQMIVFFVLWWVVARFVWP).

The protein belongs to the ATPase B chain family. In terms of assembly, F-type ATPases have 2 components, F(1) - the catalytic core - and F(0) - the membrane proton channel. F(1) has five subunits: alpha(3), beta(3), gamma(1), delta(1), epsilon(1). F(0) has three main subunits: a(1), b(2) and c(10-14). The alpha and beta chains form an alternating ring which encloses part of the gamma chain. F(1) is attached to F(0) by a central stalk formed by the gamma and epsilon chains, while a peripheral stalk is formed by the delta and b chains.

The protein localises to the cell membrane. Functionally, f(1)F(0) ATP synthase produces ATP from ADP in the presence of a proton or sodium gradient. F-type ATPases consist of two structural domains, F(1) containing the extramembraneous catalytic core and F(0) containing the membrane proton channel, linked together by a central stalk and a peripheral stalk. During catalysis, ATP synthesis in the catalytic domain of F(1) is coupled via a rotary mechanism of the central stalk subunits to proton translocation. Its function is as follows. Component of the F(0) channel, it forms part of the peripheral stalk, linking F(1) to F(0). This chain is ATP synthase subunit b, found in Polynucleobacter asymbioticus (strain DSM 18221 / CIP 109841 / QLW-P1DMWA-1) (Polynucleobacter necessarius subsp. asymbioticus).